The primary structure comprises 923 residues: Transportin-3 (923 aa).

M1 is modified (N-acetylmethionine). Residue S74 is modified to Phosphoserine. T896 carries the post-translational modification Phosphothreonine.

In terms of assembly, interacts with (GTP-bound) Ran. Interacts with (phosphorylated) SFRS1 and SFRS2; leading to their nuclear import. Interacts with NUP62. Interacts with RBM4. Interacts with CPSF6, promoting its nuclear import. As to quaternary structure, (Microbial infection) Interacts with the HIV-1 pre-integration complex (PIC), which is composed of viral genome, matrix protein, Vpr and integrase. Interacts with HIV-1 integrase protein; the interaction is direct. Expressed in skeletal muscle.

The protein resides in the nucleus envelope. It localises to the cytoplasm. Functionally, importin, which transports target proteins into the nucleus. Specifically mediates the nuclear import of splicing factor serine/arginine (SR) proteins, such as RBM4, SFRS1 and SFRS2, by recognizing phosphorylated SR domains. Also mediates the nuclear import of serine/arginine (SR) protein CPSF6, independently of CPSF6 phosphorylation. The nuclear import process is regulated by the small GTPase Ran that partitions between cytoplasm and nucleus in the predominantly GDP- and GTP-bound form, respectively. Importin associates with target cargo proteins in the cytoplasm, and the competitive binding of GTP-bound Ran induces the release of cargos in the nucleus. Its function is as follows. (Microbial infection) Involved in immunodeficiency virus (HIV-1) infection by importing the pre-integration complex (PIC) into the nucleus. Required for a nuclear maturation step of HIV-1 prior to integration. This is Transportin-3 from Homo sapiens (Human).